The chain runs to 1440 residues: Protein lin-15B (1440 aa).

Disordered regions lie at residues 1-22 (MQTLKTARLTSNPASIPTSSSS), 48-67 (ILRHRTLPAPTQETAHHLDA), 618-660 (PKEE…GRPI), and 738-769 (KDEPLDEDDFNHPSTDPVPNRTTASSQGPSSY). The span at 10 to 22 (TSNPASIPTSSSS) shows a compositional bias: low complexity. The segment covering 631-646 (STSSPATSSPTIIRPR) has biased composition (low complexity). Over residues 757-767 (NRTTASSQGPS) the composition is skewed to polar residues. The THAP-type zinc-finger motif lies at 1135–1209 (NPGVCCFCSK…LLKGMIPDAA (75 aa)). Disordered stretches follow at residues 1239–1281 (AIDL…EPSQ), 1298–1350 (RELS…GTSQ), and 1395–1440 (FADE…PSNE). Acidic residues predominate over residues 1254–1264 (TQEEEEEEEYE). Residues 1317-1329 (PNPRGRPRKYPKN) constitute a DNA-binding region (a.T hook 1). The segment covering 1396–1407 (ADEEEEEEEYEE) has biased composition (acidic residues). Positions 1418 to 1430 (GRPVGRPRKDANK) form a DNA-binding region, a.T hook 2.

Synthetic multivulva (synMuv) class B protein. SynMuv proteins are required to repress the induction of vulval development. Acts redundantly with SynMuv class A protein lin-15A to negatively regulate vulval development. Regulates let-23 basal activity. The chain is Protein lin-15B from Caenorhabditis elegans.